Reading from the N-terminus, the 144-residue chain is Large ribosomal subunit protein uL15 (144 aa).

Residues 1 to 49 (MRLNTLSPAAGSKSAPKRVGRGIGSGLGKTAGRGHKGQKSRSGGGVRVG) form a disordered region. The span at 21–31 (RGIGSGLGKTA) shows a compositional bias: gly residues.

This sequence belongs to the universal ribosomal protein uL15 family. In terms of assembly, part of the 50S ribosomal subunit.

In terms of biological role, binds to the 23S rRNA. This Shewanella frigidimarina (strain NCIMB 400) protein is Large ribosomal subunit protein uL15.